Consider the following 1819-residue polypeptide: MDSTSRRVVFFSNEFPNDDLKELFRRLDQHSKDRRFRLLSIFLEESTAVLKDEVSKLPRPLKELVPPFDSVLGLVDVDFRQGPLGAAMESSMLTILELGLFIGYVSLLCLLDQVKMLTSLVYTSHYESEDTEWDLVPGESVLAGLSIGILAAAAVALSSSLADVAKTGAEAVRVSFRLGVYVADISTKLETPQSDGTLSSWAHVVTEMTEAGVQDELRQFNTDTHSPELTKVFISAADKTSVSVSGPPSRIKAAFQHSPVLRYSKSLPLPVYDGLCHASHLYTQSDIDSIINSAESVIVADRSVRLALLSSQTGKPFIAKTASELFLEIGTELLTGTIYLDNVTAGIVQHLQPQSKEISSWQIDSFRTSLVLRGIHSAVEAKLSGEQRQLIRRDLVNWVNKDFGPRQPRSHASSKLAIVGMACRLPGGANDLDLFWKLLEEGRDTLTTVPPDRFDLNTHYDPTGKTENATQTPYGNFIDRPGFFDAGFFNMSPREAEQTDPMQRLALVTAYEALEMAGVVPGRTPSTHPSRIGTFYGQASDDWRELNASQNISTYAVPGGERAFGNGRINYFFKFSGPSFNLDTACSSGLAAVQAACSALWAGEVDTAIAGGLNVITDPDNYCGLGNAHFLSKTGQCKVWDKDADGYCRADGIGSVVIKRLEDAEADNDNILAVVLGASTNHSAEAISITHPHAGAQKANYRQVLNQAGVNPIDVSYIELHGTGTQAGDAVESESVSDIFAPVTPRRRPDQRLYLGAVKSNIGHGEAAAGIASLLKALLVYQKNLIPMHIGIKSVINPTIPKDLERRNVGLAMQNTPWPRPAGKKRLAVVNSFGAHGGNTTLLLEDAPERVKIQGTEDRITHSILLSAKSKKSLQANMESLLSYLDQHPETSLADLAYTTSSRRMHHNMRFGTSVSCISGLQKVLRSQLDNVNFASEVRPVPNEAPSVILAFTSQGAYYHGMGRELFAEFPYFRAQVQQLDRLAQRLGFPSVVPVIENSIEDTPSSPILTQLSVVILEIALARFWSLLGVSISAVIGHSLGEYAALAVAGVISATDAIYLVGRRAQLVEERCAQGSHSMLSVRAPEDEIQKMLAAEPETASIAYEVSCCNTNQDTVIGGLTGEINDIRRTLEAKSIKCTILDVPYAFHTAQVNPILDDLETLAKAVPFKAPSIPVISPLLATVIYDVKSLNANYLRRATRETVDFAAAIEAAQDMGLVDSKTIWIDVGPHPICAGLVRSMIPSAPAMSSCRRNEDSIATISKSLVTLYLAGINPCWAEFFKPREREYSLLHLPKYRWNEIDYWIPYLGTWTLDKAHLKHGTKPTTPFSVSMSRPSALRTSLVHQITAETVEATTATLHTISDMQHPDFLEAIHGHTMNKCGVATSSIWSDMAFTVGEYLYRRLVPNTKDVHMNLTDVEVLHAQVASKTKGSVQPLVLRAHLDLSTSSMSLSWFNANGETGECAAESFATAMIRFEDPMAWRKEWARLAHLVRGRIEVLEQRASEGKASRLSKPLAYALFKNVVDYADRYRGMDSVVLDELEAMAEVTLVPERYGTWHTPPHWIDSVSHLAGLVMNGSDASNTRDYFFVTPGCDSFRLLKKLEPGAQYRSYVRMFPLPEDPNMHGGDVYILQGEEIVGMVGMIRIRRVPRLLMDRFFSPPTTTSVAGPVPPLSGETTKYHDIAQTAPALPAPTLPIVVPNPVASSTMASKAPEPAPLLATSSESSTPKESPIVTPAESEREDPVDNNMISQCLRLMARETGLEVEALTADASFVQLGVDSLMSLVLSEKFRAELGVEIKSSLFLECPTIGEMTAWIEEYC.

The segment at 25–277 (RRLDQHSKDR…PLPVYDGLCH (253 aa)) is N-terminal acylcarrier protein transacylase domain (SAT). Residues 413-846 (SSKLAIVGMA…GGNTTLLLED (434 aa)) form the Ketosynthase family 3 (KS3) domain. Residues C586, H721, and H764 each act as for beta-ketoacyl synthase activity in the active site. The malonyl-CoA:ACP transacylase (MAT) domain stretch occupies residues 952 to 1249 (FTSQGAYYHG…MIPSAPAMSS (298 aa)). The tract at residues 1339–1658 (TSLVHQITAE…RLLMDRFFSP (320 aa)) is product template (PT) domain. The interval 1343–1479 (HQITAETVEA…AMIRFEDPMA (137 aa)) is N-terminal hotdog fold. Residues 1343 to 1653 (HQITAETVEA…IRRVPRLLMD (311 aa)) enclose the PKS/mFAS DH domain. H1375 (proton acceptor; for dehydratase activity) is an active-site residue. The tract at residues 1507–1653 (ASRLSKPLAY…IRRVPRLLMD (147 aa)) is C-terminal hotdog fold. Catalysis depends on D1564, which acts as the Proton donor; for dehydratase activity. Residues 1703–1742 (SSTMASKAPEPAPLLATSSESSTPKESPIVTPAESEREDP) form a disordered region. Low complexity predominate over residues 1719 to 1730 (TSSESSTPKESP). The 78-residue stretch at 1742–1819 (PVDNNMISQC…EMTAWIEEYC (78 aa)) folds into the Carrier domain. Position 1779 is an O-(pantetheine 4'-phosphoryl)serine (S1779).

Requires pantetheine 4'-phosphate as cofactor.

It functions in the pathway secondary metabolite biosynthesis. Its function is as follows. Non-reducing polyketide synthase; part of the gene cluster that mediates the biosynthesis of neosartoricin B, a prenylated anthracenone that probably exhibits T-cell antiproliferative activity, suggestive of a physiological role as an immunosuppressive agent. The non-reducing polyketide synthase nscA probably synthesizes and cyclizes the decaketide backbone. The hydrolase nscB then mediates the product release through hydrolysis followed by spontaneous decarboxylation. The prenyltransferase nscD catalyzes the addition of the dimethylallyl group to the aromatic C5. The FAD-dependent monooxygenase nscC is then responsible for the stereospecific hydroxylation at C2. Neosartoricin B can be converted into two additional compounds neosartoricins C and D. Neosartoricin C is a spirocyclic compound that is cyclized through the attack of C3 hydroxyl on C14, followed by dehydration. On the other hand, neosartoricin D is a further cyclized compound in which attack of C2 on C14 in neosartoricin C results in the formation of the acetal-containing dioxabicyclo-octanone ring. Both of these compounds are novel and possibly represent related metabolites of the gene cluster. The chain is Non-reducing polyketide synthase nscA from Trichophyton verrucosum (strain HKI 0517).